The primary structure comprises 266 residues: Hydroxyethylthiazole kinase (266 aa).

Methionine 45 contributes to the substrate binding site. 2 residues coordinate ATP: lysine 121 and serine 167. Residue glycine 194 participates in substrate binding.

The protein belongs to the Thz kinase family. Requires Mg(2+) as cofactor.

It carries out the reaction 5-(2-hydroxyethyl)-4-methylthiazole + ATP = 4-methyl-5-(2-phosphooxyethyl)-thiazole + ADP + H(+). The protein operates within cofactor biosynthesis; thiamine diphosphate biosynthesis; 4-methyl-5-(2-phosphoethyl)-thiazole from 5-(2-hydroxyethyl)-4-methylthiazole: step 1/1. Its function is as follows. Catalyzes the phosphorylation of the hydroxyl group of 4-methyl-5-beta-hydroxyethylthiazole (THZ). The sequence is that of Hydroxyethylthiazole kinase from Methanocella arvoryzae (strain DSM 22066 / NBRC 105507 / MRE50).